The chain runs to 36 residues: Photosystem I reaction center subunit VIII (36 aa).

A helical membrane pass occupies residues 7–29 (PSILVPLVGLVFPAITLASLFIY).

The protein belongs to the PsaI family.

It is found in the plastid. Its subcellular location is the chloroplast thylakoid membrane. May help in the organization of the PsaL subunit. The polypeptide is Photosystem I reaction center subunit VIII (Anthoceros angustus (Hornwort)).